Consider the following 267-residue polypeptide: Cilia- and flagella-associated protein 300 (267 aa).

It belongs to the CFAP300 family.

It localises to the cytoplasm. Its subcellular location is the cytoskeleton. It is found in the cilium axoneme. Cilium- and flagellum-specific protein that plays a role in axonemal structure organization and motility. May play a role in outer and inner dynein arm assembly. This is Cilia- and flagella-associated protein 300 from Xenopus tropicalis (Western clawed frog).